The sequence spans 205 residues: SREBP regulating gene protein (205 aa).

The Cytoplasmic segment spans residues 1–16 (MVPCGAVLWRRLLRKR). The helical transmembrane segment at 17-35 (WVLGVVFGLSLVYFLSSTF) threads the bilayer. Residues 36 to 205 (KQEERTVRDR…GEYPPELLPV (170 aa)) are Lumenal-facing. Asn-67 is a glycosylation site (N-linked (GlcNAc...) asparagine).

It belongs to the SPRING family.

Its subcellular location is the golgi apparatus membrane. Functionally, positively regulates hepatic SREBP signaling pathway by modulating the proper localization of SCAP (SREBP cleavage-activating protein) to the endoplasmic reticulum, thereby controlling the level of functional SCAP. This chain is SREBP regulating gene protein, found in Gallus gallus (Chicken).